The primary structure comprises 185 residues: N-alpha-acetyltransferase 30 (185 aa).

In terms of domain architecture, N-acetyltransferase spans 31–179; it reads IEYIPYQGES…DAVRLLLPLN (149 aa).

This sequence belongs to the acetyltransferase family. MAK3 subfamily.

In terms of biological role, probable catalytic component of a complex displaying alpha (N-terminal) acetyltransferase activity. The protein is N-alpha-acetyltransferase 30 of Dictyostelium discoideum (Social amoeba).